Here is a 260-residue protein sequence, read N- to C-terminus: GTP cyclohydrolase FolE2 (260 aa).

It belongs to the GTP cyclohydrolase IV family.

It catalyses the reaction GTP + H2O = 7,8-dihydroneopterin 3'-triphosphate + formate + H(+). The protein operates within cofactor biosynthesis; 7,8-dihydroneopterin triphosphate biosynthesis; 7,8-dihydroneopterin triphosphate from GTP: step 1/1. Converts GTP to 7,8-dihydroneopterin triphosphate. The polypeptide is GTP cyclohydrolase FolE2 (Desulfovibrio desulfuricans (strain ATCC 27774 / DSM 6949 / MB)).